Here is a 282-residue protein sequence, read N- to C-terminus: Light-independent protochlorophyllide reductase iron-sulfur ATP-binding protein (282 aa).

ATP is bound by residues 10–15 and Lys-39; that span reads GIGKST. Mg(2+) is bound at residue Ser-14. [4Fe-4S] cluster is bound by residues Cys-95 and Cys-129. 180-181 contributes to the ATP binding site; it reads NR.

Belongs to the NifH/BchL/ChlL family. In terms of assembly, homodimer. Protochlorophyllide reductase is composed of three subunits; ChlL, ChlN and ChlB. Requires [4Fe-4S] cluster as cofactor.

The protein localises to the plastid. Its subcellular location is the cyanelle. The enzyme catalyses chlorophyllide a + oxidized 2[4Fe-4S]-[ferredoxin] + 2 ADP + 2 phosphate = protochlorophyllide a + reduced 2[4Fe-4S]-[ferredoxin] + 2 ATP + 2 H2O. It participates in porphyrin-containing compound metabolism; chlorophyll biosynthesis (light-independent). In terms of biological role, component of the dark-operative protochlorophyllide reductase (DPOR) that uses Mg-ATP and reduced ferredoxin to reduce ring D of protochlorophyllide (Pchlide) to form chlorophyllide a (Chlide). This reaction is light-independent. The L component serves as a unique electron donor to the NB-component of the complex, and binds Mg-ATP. The polypeptide is Light-independent protochlorophyllide reductase iron-sulfur ATP-binding protein (Cyanophora paradoxa).